The primary structure comprises 226 residues: Orotate phosphoribosyltransferase (226 aa).

Lys29 lines the 5-phospho-alpha-D-ribose 1-diphosphate pocket. Residue 37–38 (FF) participates in orotate binding. Residues 75 to 76 (YK), Arg101, Lys102, Lys105, His107, and 126 to 134 (DDVISAGTS) contribute to the 5-phospho-alpha-D-ribose 1-diphosphate site. Orotate contacts are provided by Ser130 and Arg158.

It belongs to the purine/pyrimidine phosphoribosyltransferase family. PyrE subfamily. In terms of assembly, homodimer. Mg(2+) serves as cofactor.

It catalyses the reaction orotidine 5'-phosphate + diphosphate = orotate + 5-phospho-alpha-D-ribose 1-diphosphate. It participates in pyrimidine metabolism; UMP biosynthesis via de novo pathway; UMP from orotate: step 1/2. Functionally, catalyzes the transfer of a ribosyl phosphate group from 5-phosphoribose 1-diphosphate to orotate, leading to the formation of orotidine monophosphate (OMP). This is Orotate phosphoribosyltransferase from Ralstonia nicotianae (strain ATCC BAA-1114 / GMI1000) (Ralstonia solanacearum).